The sequence spans 350 residues: MNVPDRKKALEAAIAYIEKQFGAGSIMSLGKHSATHEISTIKTGALSLDLALGIGGVPKGRIVEIFGPESSGKTTLATHIVANAQKMGGVAAYIDAEHALDPGYASLIGANINDLMISQPDCGEDALSIAELLARSGAVDVIVIDSVAALVPKSELEGDIGDVHVGLQARMMSQALRKLTATLARSQTCAIFINQIREKIGVSFGNPETTTGGRALKFYSSIRMDIRRIGAIKGNESFDLGNRIKVKVAKNKLAPPFRTAEFDILFNEGISSAGCILDLAVEHNIVEKKGSWFNYQDRKLGQGREAVREELKKNKKLFDELEKRIYDISSASKVVAVEEKKEELKAQPVA.

Residue 67-74 (GPESSGKT) coordinates ATP.

It belongs to the RecA family.

The protein localises to the cytoplasm. Its function is as follows. Can catalyze the hydrolysis of ATP in the presence of single-stranded DNA, the ATP-dependent uptake of single-stranded DNA by duplex DNA, and the ATP-dependent hybridization of homologous single-stranded DNAs. It interacts with LexA causing its activation and leading to its autocatalytic cleavage. The chain is Protein RecA from Chlamydia caviae (strain ATCC VR-813 / DSM 19441 / 03DC25 / GPIC) (Chlamydophila caviae).